The following is a 145-amino-acid chain: Secreted RxLR effector protein 100 (145 aa).

The signal sequence occupies residues 1–19 (MRYLLLTFFTFHCQMVADA). The RxLR signature appears at 27-30 (RLLR). Positions 38-77 (SGEGKIEEAGMIVTTGAPTPENETMEHNEVPQSTTDTDQK) are disordered. An N-linked (GlcNAc...) asparagine glycan is attached at N59.

Belongs to the RxLR effector family.

The protein resides in the secreted. It is found in the host nucleus. Its function is as follows. Secreted effector that dos not suppress the host cell death induced by cell death-inducing proteins. In Plasmopara viticola (Downy mildew of grapevine), this protein is Secreted RxLR effector protein 100.